Here is a 188-residue protein sequence, read N- to C-terminus: Probable chorismate pyruvate-lyase (188 aa).

R90, L128, and E175 together coordinate substrate.

Belongs to the UbiC family.

Its subcellular location is the cytoplasm. The catalysed reaction is chorismate = 4-hydroxybenzoate + pyruvate. Its pathway is cofactor biosynthesis; ubiquinone biosynthesis. In terms of biological role, removes the pyruvyl group from chorismate, with concomitant aromatization of the ring, to provide 4-hydroxybenzoate (4HB) for the ubiquinone pathway. The protein is Probable chorismate pyruvate-lyase of Marinobacter nauticus (strain ATCC 700491 / DSM 11845 / VT8) (Marinobacter aquaeolei).